The chain runs to 360 residues: Phospho-N-acetylmuramoyl-pentapeptide-transferase (360 aa).

A run of 10 helical transmembrane segments spans residues 21-41, 74-94, 97-117, 134-154, 168-188, 199-219, 236-256, 263-283, 288-308, and 338-358; these read YVTF…LWWG, MGGI…GDLG, YVWV…IDDY, YILQ…SADM, IMPQ…VGSS, GLAI…AYLS, AGEL…FLWF, VFMG…IAVL, ILLV…ILQV, and VIVR…ATLK.

This sequence belongs to the glycosyltransferase 4 family. MraY subfamily. Mg(2+) serves as cofactor.

Its subcellular location is the cell inner membrane. The enzyme catalyses UDP-N-acetyl-alpha-D-muramoyl-L-alanyl-gamma-D-glutamyl-meso-2,6-diaminopimeloyl-D-alanyl-D-alanine + di-trans,octa-cis-undecaprenyl phosphate = di-trans,octa-cis-undecaprenyl diphospho-N-acetyl-alpha-D-muramoyl-L-alanyl-D-glutamyl-meso-2,6-diaminopimeloyl-D-alanyl-D-alanine + UMP. The protein operates within cell wall biogenesis; peptidoglycan biosynthesis. Functionally, catalyzes the initial step of the lipid cycle reactions in the biosynthesis of the cell wall peptidoglycan: transfers peptidoglycan precursor phospho-MurNAc-pentapeptide from UDP-MurNAc-pentapeptide onto the lipid carrier undecaprenyl phosphate, yielding undecaprenyl-pyrophosphoryl-MurNAc-pentapeptide, known as lipid I. The sequence is that of Phospho-N-acetylmuramoyl-pentapeptide-transferase from Shewanella woodyi (strain ATCC 51908 / MS32).